The primary structure comprises 794 residues: Kinesin-like protein KIN-13A (794 aa).

One can recognise a Kinesin motor domain in the interval 193-526 (KIKVVVRKRP…LRYADRVKSL (334 aa)). Position 282-289 (282-289 (GQTGSGKT)) interacts with ATP. Residues 525-699 (SLSKSGNSKK…YETASRQYET (175 aa)) form a disordered region. The segment covering 569–579 (ETRRRVVEKDS) has biased composition (basic and acidic residues). Composition is skewed to polar residues over residues 580–593 (NSST…QPTN) and 611–632 (EPNS…YPQE). A compositionally biased stretch (basic and acidic residues) spans 650–668 (GLREEKPDRPQNWSKRDVS). Residues 669–696 (SSDIPTLTNFRQNASETASRQYETASRQ) show a composition bias toward polar residues. Positions 705–742 (ENLDALLEEEEALIAAHRKEIEDTMEIVREEMKLLAEV) form a coiled coil.

This sequence belongs to the TRAFAC class myosin-kinesin ATPase superfamily. Kinesin family. KIN-13 subfamily. Component of the active ARAC10-IRC5-KIN13A complex. Interacts (via-C-terminus) with ICR2 and ICR5 (via N-terminus). No interactions with ICR1. In terms of tissue distribution, expressed in leaves, roots, young and mature seedlings. Preferentially expressed in the secondary cell wall pits of differentiating metaxylem vessel cells (at the protein level).

It is found in the golgi apparatus. The protein resides in the golgi stack. Its subcellular location is the cytoplasm. The protein localises to the cytoskeleton. Its function is as follows. Internal motor kinesin involved in trichome morphogenesis. Participates in regulating the formation of Golgi-associated vesicles. Plays a central role in microtubule disassembly via the active ARAC10-ICR5 cascade, which establishes the secondary cell wall pattern in metaxylem vessel cells. Acts redundantly with KIN13B to modulate cell wall synthesis and cell expansion via the THE1 pathway. This is Kinesin-like protein KIN-13A from Arabidopsis thaliana (Mouse-ear cress).